A 249-amino-acid polypeptide reads, in one-letter code: 3-deoxy-D-manno-octulosonic acid kinase (249 aa).

Residue aspartate 175 is part of the active site.

It belongs to the protein kinase superfamily. KdkA/RfaP family.

Its subcellular location is the cell inner membrane. It carries out the reaction an alpha-Kdo-(2-&gt;6)-lipid IVA + ATP = a 4-O-phospho-alpha-Kdo-(2-&gt;6)-lipid IVA + ADP + H(+). Its pathway is bacterial outer membrane biogenesis; LPS core biosynthesis. In terms of biological role, catalyzes the ATP-dependent phosphorylation of the 3-deoxy-D-manno-octulosonic acid (Kdo) residue in Kdo-lipid IV(A) at the 4-OH position. The polypeptide is 3-deoxy-D-manno-octulosonic acid kinase (Xylella fastidiosa (strain M12)).